An 87-amino-acid polypeptide reads, in one-letter code: uncharacterized protein (87 aa).

The protein to A.fulgidus AF_0255 and AF_1348.

This is an uncharacterized protein from Archaeoglobus fulgidus (strain ATCC 49558 / DSM 4304 / JCM 9628 / NBRC 100126 / VC-16).